A 115-amino-acid chain; its full sequence is NADH-ubiquinone oxidoreductase chain 3 (115 aa).

A run of 3 helical transmembrane segments spans residues 3 to 23 (VMLT…IAFW), 55 to 75 (FFLV…LLPL), and 84 to 104 (LTTM…SLAY).

Belongs to the complex I subunit 3 family. In terms of assembly, core subunit of respiratory chain NADH dehydrogenase (Complex I) which is composed of 45 different subunits. Interacts with TMEM186. Interacts with TMEM242.

It is found in the mitochondrion inner membrane. It catalyses the reaction a ubiquinone + NADH + 5 H(+)(in) = a ubiquinol + NAD(+) + 4 H(+)(out). In terms of biological role, core subunit of the mitochondrial membrane respiratory chain NADH dehydrogenase (Complex I) which catalyzes electron transfer from NADH through the respiratory chain, using ubiquinone as an electron acceptor. Essential for the catalytic activity of complex I. The sequence is that of NADH-ubiquinone oxidoreductase chain 3 from Canis lupus familiaris (Dog).